Here is a 51-residue protein sequence, read N- to C-terminus: Large ribosomal subunit protein eL39 (51 aa).

The protein belongs to the eukaryotic ribosomal protein eL39 family.

This is Large ribosomal subunit protein eL39 from Sulfurisphaera tokodaii (strain DSM 16993 / JCM 10545 / NBRC 100140 / 7) (Sulfolobus tokodaii).